A 545-amino-acid polypeptide reads, in one-letter code: Chaperonin GroEL (545 aa).

ATP contacts are provided by residues 30–33, K51, 87–91, G415, and D495; these read TLGP and DGTTT.

The protein belongs to the chaperonin (HSP60) family. As to quaternary structure, forms a cylinder of 14 subunits composed of two heptameric rings stacked back-to-back. Interacts with the co-chaperonin GroES.

The protein resides in the cytoplasm. The enzyme catalyses ATP + H2O + a folded polypeptide = ADP + phosphate + an unfolded polypeptide.. Together with its co-chaperonin GroES, plays an essential role in assisting protein folding. The GroEL-GroES system forms a nano-cage that allows encapsulation of the non-native substrate proteins and provides a physical environment optimized to promote and accelerate protein folding. The protein is Chaperonin GroEL of Shewanella amazonensis (strain ATCC BAA-1098 / SB2B).